Reading from the N-terminus, the 154-residue chain is SsrA-binding protein (154 aa).

The interval 135-154 is disordered; that stretch reads KREDLKRRQDQRDMARAMKR.

This sequence belongs to the SmpB family.

It is found in the cytoplasm. Required for rescue of stalled ribosomes mediated by trans-translation. Binds to transfer-messenger RNA (tmRNA), required for stable association of tmRNA with ribosomes. tmRNA and SmpB together mimic tRNA shape, replacing the anticodon stem-loop with SmpB. tmRNA is encoded by the ssrA gene; the 2 termini fold to resemble tRNA(Ala) and it encodes a 'tag peptide', a short internal open reading frame. During trans-translation Ala-aminoacylated tmRNA acts like a tRNA, entering the A-site of stalled ribosomes, displacing the stalled mRNA. The ribosome then switches to translate the ORF on the tmRNA; the nascent peptide is terminated with the 'tag peptide' encoded by the tmRNA and targeted for degradation. The ribosome is freed to recommence translation, which seems to be the essential function of trans-translation. The sequence is that of SsrA-binding protein from Microcystis aeruginosa (strain NIES-843 / IAM M-2473).